Consider the following 563-residue polypeptide: Chaperonin GroEL 1 (563 aa).

ATP-binding positions include Thr-29–Pro-32, Asp-86–Thr-90, Gly-413, and Asp-492. Residues Asp-520–Gly-541 form a disordered region. The span at Ala-530 to Gly-541 shows a compositional bias: gly residues.

The protein belongs to the chaperonin (HSP60) family. In terms of assembly, forms a cylinder of 14 subunits composed of two heptameric rings stacked back-to-back. Interacts with the co-chaperonin GroES.

Its subcellular location is the cytoplasm. The enzyme catalyses ATP + H2O + a folded polypeptide = ADP + phosphate + an unfolded polypeptide.. Its function is as follows. Together with its co-chaperonin GroES, plays an essential role in assisting protein folding. The GroEL-GroES system forms a nano-cage that allows encapsulation of the non-native substrate proteins and provides a physical environment optimized to promote and accelerate protein folding. This Prochlorococcus marinus (strain NATL1A) protein is Chaperonin GroEL 1.